The following is a 125-amino-acid chain: Ribosome-binding factor A (125 aa).

The protein belongs to the RbfA family. As to quaternary structure, monomer. Binds 30S ribosomal subunits, but not 50S ribosomal subunits or 70S ribosomes.

It is found in the cytoplasm. Its function is as follows. One of several proteins that assist in the late maturation steps of the functional core of the 30S ribosomal subunit. Associates with free 30S ribosomal subunits (but not with 30S subunits that are part of 70S ribosomes or polysomes). Required for efficient processing of 16S rRNA. May interact with the 5'-terminal helix region of 16S rRNA. This is Ribosome-binding factor A from Chloroherpeton thalassium (strain ATCC 35110 / GB-78).